A 4307-amino-acid polypeptide reads, in one-letter code: Cytoplasmic dynein 2 heavy chain 1 (4307 aa).

Positions 1–1650 are stem; it reads MANGTADVRK…CVQMVDSEFQ (1650 aa). 145–152 provides a ligand contact to ATP; the sequence is LGIVLRRS. The stretch at 1074-1103 forms a coiled coil; sequence NTLDKSAKLIKEKKIEFDDLEVTRKKLVDD. AAA stretches follow at residues 1651-1875, 1938-2161, 2251-2505, and 2617-2863; these read YTYE…VLRG, ELSA…KQND, ADDF…WVLG, and HYGR…ESCK. Residues 1689-1696, 1979-1986, 2291-2298, and 2655-2662 each bind ATP; these read GPAGTGKT, GPSGAGKS, GPEGCGKG, and GRSGVGRR. The tract at residues 2881–3169 is stalk; sequence AISSSKKKEL…AEVSKAQETI (289 aa). Coiled coils occupy residues 2897–2982, 3109–3200, and 3408–3442; these read LQAG…KEVQ, LETE…LATL, and IQHE…SLLE. AAA stretches follow at residues 3244–3473 and 3690–3905; these read LCTE…LIQE and MALF…IIDR.

Belongs to the dynein heavy chain family. The cytoplasmic dynein complex 2 is probably composed by a heavy chain DYNC2H1 homodimer and a number of DYNC2LI1 light intermediate chains.

The protein localises to the cytoplasm. Its subcellular location is the cytoskeleton. It is found in the cilium axoneme. It localises to the cell membrane. May function as a motor for intraflagellar retrograde transport. Functions in cilia biogenesis. May play a role in transport between endoplasmic reticulum and Golgi or organization of the Golgi in cells. This chain is Cytoplasmic dynein 2 heavy chain 1 (DYNC2H1), found in Homo sapiens (Human).